Reading from the N-terminus, the 211-residue chain is FMN-dependent NADH:quinone oxidoreductase 2 (211 aa).

Position 17 to 19 (serine 17 to serine 19) interacts with FMN.

It belongs to the azoreductase type 1 family. As to quaternary structure, homodimer. The cofactor is FMN.

It carries out the reaction 2 a quinone + NADH + H(+) = 2 a 1,4-benzosemiquinone + NAD(+). It catalyses the reaction N,N-dimethyl-1,4-phenylenediamine + anthranilate + 2 NAD(+) = 2-(4-dimethylaminophenyl)diazenylbenzoate + 2 NADH + 2 H(+). Quinone reductase that provides resistance to thiol-specific stress caused by electrophilic quinones. Functionally, also exhibits azoreductase activity. Catalyzes the reductive cleavage of the azo bond in aromatic azo compounds to the corresponding amines. This chain is FMN-dependent NADH:quinone oxidoreductase 2, found in Bacillus licheniformis (strain ATCC 14580 / DSM 13 / JCM 2505 / CCUG 7422 / NBRC 12200 / NCIMB 9375 / NCTC 10341 / NRRL NRS-1264 / Gibson 46).